The following is a 293-amino-acid chain: DNA-directed RNA polymerase III subunit rpc6 (293 aa).

This sequence belongs to the eukaryotic RPC34/RPC39 RNA polymerase subunit family. Component of the RNA polymerase III (Pol III) complex.

The protein resides in the nucleus. Its function is as follows. DNA-dependent RNA polymerase catalyzes the transcription of DNA into RNA using the four ribonucleoside triphosphates as substrates. Specific peripheric component of RNA polymerase III which synthesizes small RNAs, such as 5S rRNA and tRNAs. May direct RNA Pol III binding to the TFIIIB-DNA complex. This is DNA-directed RNA polymerase III subunit rpc6 (polr3f) from Dictyostelium discoideum (Social amoeba).